Consider the following 51-residue polypeptide: ATP synthase F(1) complex subunit epsilon, mitochondrial (51 aa).

N6-acetyllysine; alternate occurs at positions 21, 32, and 37. K21, K32, and K37 each carry N6-succinyllysine; alternate. The residue at position 44 (K44) is an N6-acetyllysine.

Belongs to the eukaryotic ATPase epsilon family. As to quaternary structure, component of the ATP synthase complex composed at least of ATP5F1A/subunit alpha, ATP5F1B/subunit beta, ATP5MC1/subunit c (homooctomer), MT-ATP6/subunit a, MT-ATP8/subunit 8, ATP5ME/subunit e, ATP5MF/subunit f, ATP5MG/subunit g, ATP5MK/subunit k, ATP5MJ/subunit j, ATP5F1C/subunit gamma, ATP5F1D/subunit delta, ATP5F1E/subunit epsilon, ATP5PF/subunit F6, ATP5PB/subunit b, ATP5PD/subunit d, ATP5PO/subunit OSCP. ATP synthase complex consists of a soluble F(1) head domain (subunits alpha(3) and beta(3)) - the catalytic core - and a membrane F(0) domain - the membrane proton channel (subunits c, a, 8, e, f, g, k and j). These two domains are linked by a central stalk (subunits gamma, delta, and epsilon) rotating inside the F1 region and a stationary peripheral stalk (subunits F6, b, d, and OSCP).

The protein localises to the mitochondrion. It localises to the mitochondrion inner membrane. Functionally, subunit epsilon, of the mitochondrial membrane ATP synthase complex (F(1)F(0) ATP synthase or Complex V) that produces ATP from ADP in the presence of a proton gradient across the membrane which is generated by electron transport complexes of the respiratory chain. ATP synthase complex consist of a soluble F(1) head domain - the catalytic core - and a membrane F(1) domain - the membrane proton channel. These two domains are linked by a central stalk rotating inside the F(1) region and a stationary peripheral stalk. During catalysis, ATP synthesis in the catalytic domain of F(1) is coupled via a rotary mechanism of the central stalk subunits to proton translocation. In vivo, can only synthesize ATP although its ATP hydrolase activity can be activated artificially in vitro. May be essential for the assembly of F(1) and may play an important role in the incorporation of the hydrophobic subunit c into the F(1)-c oligomer rotor of the mitochondrial ATP synthase complex. This chain is ATP synthase F(1) complex subunit epsilon, mitochondrial, found in Rattus norvegicus (Rat).